We begin with the raw amino-acid sequence, 429 residues long: Prenyltransferase okaC (429 aa).

Dimethylallyl diphosphate-binding residues include arginine 101, lysine 189, tyrosine 191, lysine 257, tyrosine 259, tyrosine 342, tyrosine 406, and tyrosine 410.

Belongs to the tryptophan dimethylallyltransferase family.

The enzyme catalyses cyclo(L-Trp-L-Trp) + 2 dimethylallyl diphosphate = cyclo(N(8)-(alpha,alpha-dimethylallyl)-L-Trp-6a-(alpha,alpha-dimethylallyl)-L-Trp) + 2 diphosphate. It participates in alkaloid biosynthesis. Prenyltransferase; part of the gene cluster that mediates the biosynthesis of okaramine B, a prenylated indole alkaloid that possesses an unusual octacyclic ring system, including a four-membered azetidine ring and an eight-membered azocine ring, and that exhibits insecticidal activity against silkworm larvae. Within the pathway, okaC performs asymmetric reverse prenylation of cyclo(L-Trp-L-Trp) at N-1 and C-2' of the indole ring to produce the cyclic prenylated tryptophan dimer cyclo(N8-(alpha,alpha-dimethylallyl)-L-Trp-6a-(alpha,alpha-dime-thylallyl)-L-Trp). The biosynthesis begins with the NRPS okaA that condenses two tryptophan molecules into cyclo(L-Trp-L-Trp). Prenylation by the prenyltransferase okaC then leads to the formation of cyclo(N8-(alpha,alpha-dimethylallyl)-L-Trp-6a-(alpha,alpha-dime-thylallyl)-L-Trp). This is followed by indole 2,3-epoxidation by the FAD-dependent monooxygenase okaB to facilitate the formation of the hexahydropyrrolo[2,3-b]indole (HPI) moiety of okaramine C. The cytochrome P450 monooxygenase okaD then likely catalyzes formation of the eight-membered ring of okaramine A. The dioxygenase okaE further forms the unusual 2-dimethyl-3-methyl-azetidine ring to yield 12-deshydroxyl okaramine E, as well as the hydroxylation of 12-deshydroxyl okaramine E to produce okaramine E. The cytochrome P450 monoxygenase okaG converts 12-deshydroxyl okaramine E into 3-desmethyl okaramine B which is further methylated by the methyltransferase okaF into okaramine B. In a shunt pathway, okaG and okaF together are also able to convert okaramine E into okaramine D. Okaramine H is produced by nonenzymatic conversion from okaramine A. In Penicillium ochrochloron, this protein is Prenyltransferase okaC.